A 430-amino-acid chain; its full sequence is Pyrroloquinoline quinone-dependent sugar dehydrogenase (430 aa).

Positions 1–23 are cleaved as a signal peptide; that stretch reads MARLAPHTLLLALFVFLFGSCTA. Asn-25 carries N-linked (GlcNAc...) asparagine glycosylation. Residue Arg-57 participates in pyrroloquinoline quinone binding. 2 N-linked (GlcNAc...) asparagine glycosylation sites follow: Asn-94 and Asn-147. Residue His-153 participates in pyrroloquinoline quinone binding. N-linked (GlcNAc...) asparagine glycosylation is present at Asn-184. Arg-220 is a pyrroloquinoline quinone binding site. Ca(2+) is bound by residues Ser-240 and Asp-242. Cys-281 and Cys-316 are disulfide-bonded. N-linked (GlcNAc...) asparagine glycosylation is present at Asn-306. His-330 serves as a coordination point for pyrroloquinoline quinone. An N-linked (GlcNAc...) asparagine glycan is attached at Asn-341. Pyrroloquinoline quinone is bound at residue His-350. Cys-388 and Cys-392 form a disulfide bridge.

Belongs to the sugar dehydrogenase AA12 family. Ca(2+) is required as a cofactor. The cofactor is pyrroloquinoline quinone.

It is found in the secreted. Its function is as follows. Pyrroloquinoline quinone (PPQ)-dependent oxidoreductase that catalyzes the oxidation of various sugars such as L-fucose. The chain is Pyrroloquinoline quinone-dependent sugar dehydrogenase from Hypocrea jecorina (strain QM6a) (Trichoderma reesei).